Here is a 118-residue protein sequence, read N- to C-terminus: Hisactophilin-1 (118 aa).

Glycine 2 carries N-myristoyl glycine lipidation. Positions 8-109 (SHHGHFLSAE…HVSTKEHHDH (102 aa)) are contains several HHXH repeats. 2 repeat units span residues 34–46 (FHVENHGGKVALK) and 74–86 (FHLEHHGGKVSIK). The interval 34–86 (FHVENHGGKVALKTHCGKYLSIGDHKQVYLSHHLHGDHSLFHLEHHGGKVSIK) is 2 X 13 AA approximate repeats.

The protein belongs to the hisactophilin family. Homodimer or heterodimer of hatA and hatB, linked by a disulfide bond. Post-translationally, phosphorylated.

The protein localises to the cytoplasm. It localises to the cell membrane. Its function is as follows. May act as an intracellular pH sensor that links chemotactic signals to responses in the microfilament system of the cells by nucleating actin polymerization or stabilizing the filaments. The polypeptide is Hisactophilin-1 (hatA) (Dictyostelium discoideum (Social amoeba)).